The sequence spans 210 residues: Ribosomal RNA small subunit methyltransferase G (210 aa).

S-adenosyl-L-methionine-binding positions include Leu78, 124-125 (IE), and Arg138.

It belongs to the methyltransferase superfamily. RNA methyltransferase RsmG family.

The protein localises to the cytoplasm. The catalysed reaction is guanosine(527) in 16S rRNA + S-adenosyl-L-methionine = N(7)-methylguanosine(527) in 16S rRNA + S-adenosyl-L-homocysteine. Its function is as follows. Specifically methylates the N7 position of guanine in position 527 of 16S rRNA. The protein is Ribosomal RNA small subunit methyltransferase G of Bordetella bronchiseptica (strain ATCC BAA-588 / NCTC 13252 / RB50) (Alcaligenes bronchisepticus).